Reading from the N-terminus, the 190-residue chain is Nucleoside triphosphate pyrophosphatase (190 aa).

D69 functions as the Proton acceptor in the catalytic mechanism.

It belongs to the Maf family. Requires a divalent metal cation as cofactor.

The protein resides in the cytoplasm. The catalysed reaction is a ribonucleoside 5'-triphosphate + H2O = a ribonucleoside 5'-phosphate + diphosphate + H(+). It catalyses the reaction a 2'-deoxyribonucleoside 5'-triphosphate + H2O = a 2'-deoxyribonucleoside 5'-phosphate + diphosphate + H(+). Nucleoside triphosphate pyrophosphatase. May have a dual role in cell division arrest and in preventing the incorporation of modified nucleotides into cellular nucleic acids. The chain is Nucleoside triphosphate pyrophosphatase from Helicobacter pylori (strain G27).